We begin with the raw amino-acid sequence, 722 residues long: MQRRARGASSLRLARCLTPANLIRGANAGVPERRIFAGCLLPTPEGLLSAAVGVLRQRADDLQPAFLTGADRSVRLAARHHNTVPESLIVDGLASDPHYDYIRHYASAAKQALGEVELSGGQLSRAILAQYWKYLQTVVPSGLDIPDDPAGDCDPSLHVLLRPTLLPKLLVRAPFKSGAAAAKYAAAVAGLRDAAHRLQQYMFFMRPADPSRPSTDTALRLSELLAYVSVLYHWASWMLWTADKYVCRRLGPADRRFVALSGSLEAPAETFARHLDRGPSGTTGSMQCMALRAAVSDVLGHLTRLAHLWETGKRSGGTYGIVDAIVSTVEVLSIVHHHAQYIINATLTGYVVWASDSLNNEYLTAAVDSQERFCRTAAPLFPTMTAPSWARMELSIKSWFGAALAPDLLRSGTPSPHYESILRLAASGPPGGRGAVGGSCRDKIQRTRRDNAPPPLPRARPHSTPAAPRRCRRHREDLPEPPHVDAADRGPEPCAGRPATYYTHMAGAPPRLPPRNPAPPEQRPAAAARPLAAQREAAGVYDAVRTWGPDAEAEPDQMENTYLLPDDDAAMPAGVGLGATPAADTTAAAAWPAESHAPRAPSEDADSIYESVGEDGGRVYEEIPWVRVYENICPRRRLAGGAALPGDAPDSPYIEAENPLYDWGGSALFSPRRATRAPDPGLSLSPMPARPRTNALANDGPTNVAALSALLTKLKRGRHQSH.

Positions 423–534 are disordered; the sequence is RLAASGPPGG…AAAARPLAAQ (112 aa). 2 stretches are compositionally biased toward basic and acidic residues: residues 440–451 and 474–491; these read CRDKIQRTRRDN and HRED…DRGP. Residues 510–522 are compositionally biased toward pro residues; that stretch reads PRLPPRNPAPPEQ. A compositionally biased stretch (low complexity) spans 523–534; that stretch reads RPAAAARPLAAQ.

It belongs to the herpesviridae HHV-1 VP11/12 protein family. As to quaternary structure, interacts with VP16. Interacts with host LCK, PIK3R1, SHC1 AND GRB2; these interactions promote the activation of the PI3K/AKT pathway. Interacts with host YWHAB. Interacts with ICP0; this interaction targets UL46 for degradation by the proteasome. Phosphorylated by host LCK. The phosphorylation seems to be lymphocyte-specific.

The protein localises to the virion tegument. The protein resides in the host cell membrane. Its function is as follows. Plays a role in the activation of the host PI3K/AKT pathway to promote cell survival. Interacts with and activates host LCK and thereby recruits downstream partners SHC1, GRB2 and PI3KR1 in order to activate the PI3K pathway by phosphorylating host AKT on its activating residues. This mechanism is inhibited by the viral protein US3 that instead promotes incorporation of UL46 into virions. The sequence is that of Tegument protein UL46 from Homo sapiens (Human).